Here is a 218-residue protein sequence, read N- to C-terminus: Ropporin-1-like protein (218 aa).

Positions 17 to 54 (PELPDILKQFTKAAIRTQPADVLQWSAGYFSALSRGDP) constitute an RIIa domain.

Belongs to the ropporin family. Component of the axonemal radial spoke complex 1 (RS1), at least composed of spoke head proteins RSPH1, RSPH3, RSPH9 and the cilia-specific component RSPH4A or sperm-specific component RSPH6A, spoke stalk proteins RSPH14, DNAJB13, DYDC1, ROPN1L and NME5, and the anchor protein IQUB. May interact with AKAP3. Interacts with FSCB; the interaction increases upon spermatozoa capacitation conditions. Interacts with CFAP61. Post-translationally, sumoylated, sumoylation decreases upon spermatozoa capacitation conditions. In terms of tissue distribution, testis-specific. Expression is restricted to germ cells.

Its subcellular location is the cell projection. The protein resides in the cilium. The protein localises to the flagellum. Functions as part of axonemal radial spoke complexes that play an important part in the motility of sperm and cilia. Important for male fertility. With ROPN1, involved in fibrous sheath integrity and sperm motility, plays a role in PKA-dependent signaling processes required for spermatozoa capacitation. This chain is Ropporin-1-like protein (Ropn1l), found in Mus musculus (Mouse).